Reading from the N-terminus, the 206-residue chain is LexA repressor (206 aa).

A DNA-binding region (H-T-H motif) is located at residues R28 to K48. Residues S123 and K160 each act as for autocatalytic cleavage activity in the active site.

This sequence belongs to the peptidase S24 family. In terms of assembly, homodimer.

It catalyses the reaction Hydrolysis of Ala-|-Gly bond in repressor LexA.. Its function is as follows. Represses a number of genes involved in the response to DNA damage (SOS response), including recA and lexA. In the presence of single-stranded DNA, RecA interacts with LexA causing an autocatalytic cleavage which disrupts the DNA-binding part of LexA, leading to derepression of the SOS regulon and eventually DNA repair. This chain is LexA repressor, found in Shewanella halifaxensis (strain HAW-EB4).